Here is a 388-residue protein sequence, read N- to C-terminus: Acetate kinase (388 aa).

Position 14 (N14) interacts with Mg(2+). K21 serves as a coordination point for ATP. Position 80 (R80) interacts with substrate. The Proton donor/acceptor role is filled by D137. ATP is bound by residues 197–201, 271–273, and 319–323; these read HLGNG, DFR, and GIGEH. Residue E373 coordinates Mg(2+).

This sequence belongs to the acetokinase family. In terms of assembly, homodimer. Mg(2+) is required as a cofactor. Requires Mn(2+) as cofactor.

It is found in the cytoplasm. The catalysed reaction is acetate + ATP = acetyl phosphate + ADP. Its pathway is metabolic intermediate biosynthesis; acetyl-CoA biosynthesis; acetyl-CoA from acetate: step 1/2. Catalyzes the formation of acetyl phosphate from acetate and ATP. Can also catalyze the reverse reaction. The protein is Acetate kinase of Mycobacterium marinum (strain ATCC BAA-535 / M).